The chain runs to 377 residues: All-trans-retinol dehydrogenase [NAD(+)] ADH4 (377 aa).

Cysteine 47 is a binding site for Zn(2+). 48–49 is an NAD(+) binding site; it reads PT. Residues histidine 68, cysteine 98, cysteine 101, cysteine 104, cysteine 112, and cysteine 179 each contribute to the Zn(2+) site. NAD(+) is bound by residues 204 to 209, aspartate 228, lysine 233, 297 to 299, 320 to 322, and arginine 372; these read GLGCVG, VGA, and TFF.

This sequence belongs to the zinc-containing alcohol dehydrogenase family. Class-II subfamily. Dimer. Requires Zn(2+) as cofactor. As to expression, liver specific.

The protein localises to the cytoplasm. The enzyme catalyses all-trans-retinol + NAD(+) = all-trans-retinal + NADH + H(+). It catalyses the reaction 9-cis-retinol + NAD(+) = 9-cis-retinal + NADH + H(+). The catalysed reaction is 20-oxo-(5Z,8Z,11Z,14Z)-eicosatetraenoate + NAD(+) + H2O = (5Z,8Z,11Z,14Z)-eicosatetraenedioate + NADH + 2 H(+). It carries out the reaction 20-hydroxy-(5Z,8Z,11Z,14Z)-eicosatetraenoate + NAD(+) = 20-oxo-(5Z,8Z,11Z,14Z)-eicosatetraenoate + NADH + H(+). The enzyme catalyses 1,4-benzoquinone + NADH + H(+) = hydroquinone + NAD(+). Oxidation of 20-HETE is inhibited by low concentrations of N-heptylformamide. Oxidation of 20-HETE is a decreased by 55-65% by either all-trans-retinol or all-trans-retinoic acid. Strongly inhibited by omega-hydroxy fatty acids. Its function is as follows. Catalyzes the NAD-dependent oxidation of either all-trans-retinol or 9-cis-retinol. Also oxidizes long chain omega-hydroxy fatty acids, such as 20-HETE, producing both the intermediate aldehyde, 20-oxoarachidonate and the end product, a dicarboxylic acid, (5Z,8Z,11Z,14Z)-eicosatetraenedioate. Also catalyzes the reduction of benzoquinones. The polypeptide is All-trans-retinol dehydrogenase [NAD(+)] ADH4 (Rattus norvegicus (Rat)).